Here is a 431-residue protein sequence, read N- to C-terminus: Divergent protein kinase domain 1B (431 aa).

Residues M1–K30 lie on the Cytoplasmic side of the membrane. Residues R5–R6 carry the May mediate ER retention motif. The chain crosses the membrane as a helical span at residues Y31–S51. The Lumenal segment spans residues S52 to S431. Disulfide bonds link C57/C94 and C62/C117.

The protein belongs to the DIPK family. In terms of processing, among the many cysteines in the lumenal domain, most are probably involved in disulfide bonds.

It localises to the endoplasmic reticulum membrane. This is Divergent protein kinase domain 1B from Rattus norvegicus (Rat).